Reading from the N-terminus, the 465-residue chain is Chromosomal replication initiator protein DnaA (465 aa).

The domain I, interacts with DnaA modulators stretch occupies residues 1 to 87; that stretch reads MLWTDCLTRL…RPGSILSSSE (87 aa). A disordered region spans residues 81-123; that stretch reads SILSSSEQPATTTAALQTAPIPQPAKVKREPEPVANTAVSSKS. A compositionally biased stretch (low complexity) spans 88 to 100; the sequence is QPATTTAALQTAP. A domain II region spans residues 88–127; that stretch reads QPATTTAALQTAPIPQPAKVKREPEPVANTAVSSKSSKKK. The domain III, AAA+ region stretch occupies residues 128 to 345; sequence LLNPQFTFSL…GALNKVVAIS (218 aa). Gly173, Gly175, Lys176, and Thr177 together coordinate ATP. The tract at residues 346-465 is domain IV, binds dsDNA; sequence RFKGAPIDLD…YKNLLRLLQS (120 aa).

It belongs to the DnaA family. As to quaternary structure, oligomerizes as a right-handed, spiral filament on DNA at oriC.

Its subcellular location is the cytoplasm. Plays an essential role in the initiation and regulation of chromosomal replication. ATP-DnaA binds to the origin of replication (oriC) to initiate formation of the DNA replication initiation complex once per cell cycle. Binds the DnaA box (a 9 base pair repeat at the origin) and separates the double-stranded (ds)DNA. Forms a right-handed helical filament on oriC DNA; dsDNA binds to the exterior of the filament while single-stranded (ss)DNA is stabiized in the filament's interior. The ATP-DnaA-oriC complex binds and stabilizes one strand of the AT-rich DNA unwinding element (DUE), permitting loading of DNA polymerase. After initiation quickly degrades to an ADP-DnaA complex that is not apt for DNA replication. Binds acidic phospholipids. The sequence is that of Chromosomal replication initiator protein DnaA from Acinetobacter baumannii (strain AB307-0294).